Here is a 286-residue protein sequence, read N- to C-terminus: ATP phosphoribosyltransferase (286 aa).

Belongs to the ATP phosphoribosyltransferase family. Long subfamily. Mg(2+) serves as cofactor.

It localises to the cytoplasm. The catalysed reaction is 1-(5-phospho-beta-D-ribosyl)-ATP + diphosphate = 5-phospho-alpha-D-ribose 1-diphosphate + ATP. Its pathway is amino-acid biosynthesis; L-histidine biosynthesis; L-histidine from 5-phospho-alpha-D-ribose 1-diphosphate: step 1/9. With respect to regulation, feedback inhibited by histidine. In terms of biological role, catalyzes the condensation of ATP and 5-phosphoribose 1-diphosphate to form N'-(5'-phosphoribosyl)-ATP (PR-ATP). Has a crucial role in the pathway because the rate of histidine biosynthesis seems to be controlled primarily by regulation of HisG enzymatic activity. This Paenarthrobacter aurescens (strain TC1) protein is ATP phosphoribosyltransferase.